Reading from the N-terminus, the 576-residue chain is Arginine--tRNA ligase (576 aa).

A 'HIGH' region motif is present at residues 122–132; sequence PNVAKEMHVGH.

This sequence belongs to the class-I aminoacyl-tRNA synthetase family. Monomer.

It is found in the cytoplasm. The catalysed reaction is tRNA(Arg) + L-arginine + ATP = L-arginyl-tRNA(Arg) + AMP + diphosphate. The chain is Arginine--tRNA ligase from Pectobacterium atrosepticum (strain SCRI 1043 / ATCC BAA-672) (Erwinia carotovora subsp. atroseptica).